A 176-amino-acid chain; its full sequence is Peptidyl-prolyl cis-trans isomerase cyp6 (176 aa).

A PPIase cyclophilin-type domain is found at 10-173 (FFDIAVNGQH…AKIEITDCGE (164 aa)).

The protein belongs to the cyclophilin-type PPIase family.

It carries out the reaction [protein]-peptidylproline (omega=180) = [protein]-peptidylproline (omega=0). PPIases accelerate the folding of proteins. It catalyzes the cis-trans isomerization of proline imidic peptide bonds in oligopeptides. The protein is Peptidyl-prolyl cis-trans isomerase cyp6 (cyp6) of Rhizopus delemar (strain RA 99-880 / ATCC MYA-4621 / FGSC 9543 / NRRL 43880) (Mucormycosis agent).